A 258-amino-acid polypeptide reads, in one-letter code: Flap endonuclease Xni (258 aa).

Aspartate 109 lines the Mg(2+) pocket. Residues 165 to 254 enclose the 5'-3' exonuclease domain; the sequence is VKPEQLPDYW…GFNLQDIRYL (90 aa). Leucine 176, alanine 177, proline 185, isoleucine 187, and isoleucine 190 together coordinate K(+). Residues 189 to 194 are interaction with DNA; it reads GIGPKA.

The protein belongs to the Xni family. Mg(2+) is required as a cofactor. K(+) serves as cofactor.

Has flap endonuclease activity. During DNA replication, flap endonucleases cleave the 5'-overhanging flap structure that is generated by displacement synthesis when DNA polymerase encounters the 5'-end of a downstream Okazaki fragment. This is Flap endonuclease Xni from Photobacterium profundum (strain SS9).